Reading from the N-terminus, the 131-residue chain is Small ribosomal subunit protein uS8 (131 aa).

This sequence belongs to the universal ribosomal protein uS8 family. In terms of assembly, part of the 30S ribosomal subunit. Contacts proteins S5 and S12.

One of the primary rRNA binding proteins, it binds directly to 16S rRNA central domain where it helps coordinate assembly of the platform of the 30S subunit. In Burkholderia multivorans (strain ATCC 17616 / 249), this protein is Small ribosomal subunit protein uS8.